Reading from the N-terminus, the 647-residue chain is Probable inactive receptor kinase RLK902 (647 aa).

Positions 1 to 29 are cleaved as a signal peptide; the sequence is MRLFFTPSMSNLSIFFSILLLSLPLPSIG. LRR repeat units follow at residues 69-93, 94-118, 119-142, 144-165, and 166-192; these read GGRV…IFGN, LTQL…LGSC, SDLR…LFSL, NLVR…GFKN, and LTRL…SLDQ. Residues 268–288 form a helical membrane-spanning segment; that stretch reads GIVIGCVVGLSLIVMILMVLF. The region spanning 365–639 is the Protein kinase domain; it reads RASAEVLGKG…EVVRRIQELR (275 aa). Phosphoserine is present on Ser367. 371–379 contributes to the ATP binding site; it reads LGKGTFGTA. Residue Thr388 is modified to Phosphothreonine. Lys393 provides a ligand contact to ATP. Ser444 carries the post-translational modification Phosphoserine. A Phosphothreonine modification is found at Thr520. Ser540 is subject to Phosphoserine. Thr618 bears the Phosphothreonine mark.

The protein belongs to the protein kinase superfamily. Ser/Thr protein kinase family. In terms of assembly, interacts with At3g17950, At3g27210 and At5g05190. Autophosphorylation. Expressed in root tips, lateral root primordia, stipules, and floral organ abscission zones.

The protein localises to the cell membrane. In Arabidopsis thaliana (Mouse-ear cress), this protein is Probable inactive receptor kinase RLK902 (RLK902).